Consider the following 560-residue polypeptide: Excitatory amino acid transporter 5 (560 aa).

Residues 1–16 (MVPHAILARGRDVCRR) lie on the Cytoplasmic side of the membrane. Transmembrane regions (helical) follow at residues 17 to 37 (NGLL…GFFL), 60 to 80 (MLKM…LASL), and 94 to 114 (AYYL…VSII). Topologically, residues 115–216 (HPGSAAQKET…EVVYKSEPGT (102 aa)) are extracellular. N-linked (GlcNAc...) asparagine glycosylation occurs at asparagine 191. 7 helical membrane-spanning segments follow: residues 217 to 237 (SDGM…IMLG), 260 to 280 (IVAV…AGKI), 300 to 320 (VVCG…FFIT), 330 to 350 (GILQ…TLPI), 372 to 392 (VGAT…AIFI), 414 to 434 (AASI…VIVL), and 457 to 477 (FRTM…AHIC).

It belongs to the dicarboxylate/amino acid:cation symporter (DAACS) (TC 2.A.23) family. SLC1A7 subfamily. Interacts with the PDZ domains of DLG4. In terms of tissue distribution, expressed primarily in retina. Detectable in liver, heart, muscle and brain.

It localises to the photoreceptor inner segment membrane. Its subcellular location is the synaptic cell membrane. It carries out the reaction K(+)(in) + L-glutamate(out) + 3 Na(+)(out) + H(+)(out) = K(+)(out) + L-glutamate(in) + 3 Na(+)(in) + H(+)(in). The catalysed reaction is K(+)(in) + L-aspartate(out) + 3 Na(+)(out) + H(+)(out) = K(+)(out) + L-aspartate(in) + 3 Na(+)(in) + H(+)(in). It catalyses the reaction D-aspartate(out) + K(+)(in) + 3 Na(+)(out) + H(+)(out) = D-aspartate(in) + K(+)(out) + 3 Na(+)(in) + H(+)(in). Functionally, sodium-dependent, high-affinity amino acid transporter that mediates the uptake of L-glutamate and also L-aspartate and D-aspartate. Functions as a symporter that transports one amino acid molecule together with two or three Na(+) ions and one proton, in parallel with the counter-transport of one K(+) ion. Acts primarily as an inhibitory glutamate-gated chloride channel being a major inhibitory presynaptic receptor at mammalian rod bipolar cell axon terminals. Glutamate binding gates a large Cl(-) conductance that mediates inhibition, affecting visual processing in the retina. This is Excitatory amino acid transporter 5 from Homo sapiens (Human).